We begin with the raw amino-acid sequence, 504 residues long: Peroxisome proliferator-activated receptor gamma (504 aa).

At Ser111 the chain carries Phosphoserine; by MAPK. A DNA-binding region (nuclear receptor) is located at residues 135 to 209 (AIECRVCGDK…VGMSHNAIRF (75 aa)). 2 consecutive NR C4-type zinc fingers follow at residues 138–158 (CRVC…CEGC) and 175–197 (CDLN…FQKC). An interaction with FAM120B region spans residues 204–279 (HNAIRFGRMP…DKSPFVIYDM (76 aa)). Residues 237 to 502 (DLRALAKHLY…HPLLQEIYKD (266 aa)) enclose the NR LBD domain. Lys251 is covalently cross-linked (Glycyl lysine isopeptide (Lys-Gly) (interchain with G-Cter in ubiquitin)). A 9aaTAD motif is present at residues 494-502 (PLLQEIYKD).

It belongs to the nuclear hormone receptor family. NR1 subfamily. As to quaternary structure, interacts with FOXO1 (acetylated form). Heterodimer with other nuclear receptors, such as RXRA. The heterodimer with the retinoic acid receptor RXRA is called adipocyte-specific transcription factor ARF6. Interacts with NCOA6 coactivator, leading to a strong increase in transcription of target genes. Interacts with coactivator PPARBP, leading to a mild increase in transcription of target genes. Interacts with NOCA7 in a ligand-inducible manner. Interacts with NCOA1 and NCOA2 LXXLL motifs. Interacts with ASXL1, ASXL2, DNTTIP2, FAM120B, MAP2K1/MEK1, NR0B2, PDPK1, PRDM16, PRMT2 and TGFB1I1. Interacts (when activated by agonist) with PPP5C. Interacts with HELZ2 and THRAP3; the interaction stimulates the transcriptional activity of PPARG. Interacts with PER2, the interaction is ligand dependent and blocks PPARG recruitment to target promoters. Interacts with NOCT. Interacts with ACTN4. Interacts (when in the liganded conformation) with GPS2. Interacts with CRY1 and CRY2 in a ligand-dependent manner. In the absence of hormonal ligand, interacts with TACC1. In macrophages, interacts with PAQR3 and STUB1; the interactions promote PPARG poylubiquitination and STUB1-mediated degradation. Post-translationally, phosphorylated at basal conditions and dephosphorylated when treated with the ligand. May be dephosphorylated by PPP5C. The phosphorylated form may be inactive and dephosphorylation induces adipogenic activity. Ubiquitinated by E3 ubiquitin-protein ligase complex containing FBXO9; leading to proteasomal degradation. Ubiquitinated at Lys-251 by TRIM55 leading to proteasomal degradation. Ubiquitinated by E3 ubiquitin-protein ligase STUB1/CHIP; leading to proteasomal degradation. As to expression, highest expression in adipose tissue and lower in spleen. Very low levels in kidney, intestine, lung and muscle.

The protein localises to the nucleus. Its subcellular location is the cytoplasm. Its activity is regulated as follows. PDPK1 activates its transcriptional activity independently of its kinase activity. Functionally, nuclear receptor that binds peroxisome proliferators such as hypolipidemic drugs and fatty acids. Once activated by a ligand, the nuclear receptor binds to DNA specific PPAR response elements (PPRE) and modulates the transcription of its target genes, such as acyl-CoA oxidase. It therefore controls the peroxisomal beta-oxidation pathway of fatty acids. Key regulator of adipocyte differentiation and glucose homeostasis. ARF6 acts as a key regulator of the tissue-specific adipocyte P2 (aP2) enhancer. Acts as a critical regulator of gut homeostasis by suppressing NF-kappa-B-mediated pro-inflammatory responses. Plays a role in the regulation of cardiovascular circadian rhythms by regulating the transcription of BMAL1 in the blood vessels. The polypeptide is Peroxisome proliferator-activated receptor gamma (PPARG) (Sus scrofa (Pig)).